Consider the following 320-residue polypeptide: o-succinylbenzoate synthase (320 aa).

Residue K133 is the Proton donor of the active site. Residues D161, E190, and D213 each coordinate Mg(2+). K235 functions as the Proton acceptor in the catalytic mechanism.

This sequence belongs to the mandelate racemase/muconate lactonizing enzyme family. MenC type 1 subfamily. A divalent metal cation serves as cofactor.

It carries out the reaction (1R,6R)-6-hydroxy-2-succinyl-cyclohexa-2,4-diene-1-carboxylate = 2-succinylbenzoate + H2O. The protein operates within quinol/quinone metabolism; 1,4-dihydroxy-2-naphthoate biosynthesis; 1,4-dihydroxy-2-naphthoate from chorismate: step 4/7. It functions in the pathway quinol/quinone metabolism; menaquinone biosynthesis. Its function is as follows. Converts 2-succinyl-6-hydroxy-2,4-cyclohexadiene-1-carboxylate (SHCHC) to 2-succinylbenzoate (OSB). The protein is o-succinylbenzoate synthase of Salmonella enteritidis PT4 (strain P125109).